The following is a 2726-amino-acid chain: Filamin-C (2726 aa).

The segment at 1-260 (MMNNSNYSDA…VMTYLSQFPK (260 aa)) is actin-binding. The residue at position 5 (Ser5) is a Phosphoserine. Calponin-homology (CH) domains lie at 37-143 (KIQQ…LHYS) and 160-263 (QTPK…KAKL). Filamin repeat units follow at residues 271–369 (SKQL…EVNV), 371–469 (MALG…PVHV), 470–566 (AEAC…EVQV), 567–659 (SPEA…IAHI), 663–759 (PPDC…RVNV), 760–862 (GEGS…HIKV), 863–961 (DPSH…VVNV), 962–1057 (APPL…AVEG), 1058–1150 (VLPP…KATI), 1151–1245 (QPVF…RVHV), 1246–1345 (QPAV…RVGV), 1346–1438 (TEGC…RVPV), 1439–1534 (KDVV…KIKV), 1535–1631 (LPAH…RIHA), and 1636–1735 (DASK…HVLA). Residue Arg1003 is modified to Omega-N-methylarginine. Phosphoserine occurs at positions 1162 and 1339. Positions 1736-1759 (CDPLPHVEEPAEVLQLHQPYAPLR) are hinge 1. Filamin repeat units follow at residues 1760–1854 (PGTC…LQFY), 1855–1947 (VDAI…TAKI), 1948–2034 (TGDD…KILV), and 2037–2129 (SEIG…TVKV). Ser2043 carries the post-translational modification Phosphoserine. The interval 2163–2244 (GNWFQMVSAQ…FGSITRQQEG (82 aa)) is intradomain insert; mediate targeting to Z lines. Basic and acidic residues predominate over residues 2194 to 2210 (ISKTRGGETKREVRVEE). The tract at residues 2194 to 2214 (ISKTRGGETKREVRVEESTQV) is disordered. A phosphoserine mark is found at Ser2234 and Ser2237. The residue at position 2239 (Thr2239) is a Phosphothreonine. Polar residues predominate over residues 2241 to 2260 (QQEGEASSQDMTAQVTSPSG). The interval 2241–2261 (QQEGEASSQDMTAQVTSPSGK) is disordered. The stretch at 2245-2307 (EASSQDMTAQ…VPGSPFQFTV (63 aa)) is one Filamin 20; mediates interaction with XIRP1 repeat. Filamin repeat units follow at residues 2310–2402 (LGEG…VVPV), 2404–2497 (SLSD…KIRV), and 2501–2593 (SQAG…KAKV). Residues 2404-2725 (SLSDDARRLT…VPGSPFKVNV (322 aa)) are interaction with INPPL1. A phosphoserine mark is found at Ser2587, Ser2618, Ser2621, Ser2633, Ser2715, and Ser2719. The interval 2594–2630 (TGPRLSGGHSLHETSTVLVETVTKSSSSRGASYSSIP) is hinge 2. A self-association site, tail region spans residues 2594 to 2726 (TGPRLSGGHS…PGSPFKVNVP (133 aa)). Residues 2631 to 2725 (KFSSDASKVV…VPGSPFKVNV (95 aa)) form a Filamin 24 repeat.

It belongs to the filamin family. As to quaternary structure, homodimer; the filamin repeat 24 and the second hinge domain are important for dimer formation. Interacts with FLNB, KCND2, INPPL1, ITGB1A, MYOT, MYOZ1 and MYOZ3. Interacts with sarcoglycans SGCD and SGCG. Interacts (via filament repeats 17-18, 20-21 and 24) with USP25 (isoform USP25m only). Interacts with FBLIM1. Interacts with KY. Interacts with IGFN1. Interacts with MICALL2. Interacts with XIRP1; this interaction is mediated by filamin 20 repeat. Interacts with ANK3. Interacts with SYNPO2. In terms of processing, ubiquitinated by FBXL22, leading to proteasomal degradation.

Its subcellular location is the cytoplasm. It localises to the membrane. It is found in the cytoskeleton. The protein resides in the myofibril. The protein localises to the sarcomere. Its subcellular location is the z line. Its function is as follows. Muscle-specific filamin, which plays a central role in sarcomere assembly and organization. Critical for normal myogenesis, it probably functions as a large actin-cross-linking protein with structural functions at the Z lines in muscle cells. May be involved in reorganizing the actin cytoskeleton in response to signaling events. This chain is Filamin-C (Flnc), found in Rattus norvegicus (Rat).